Consider the following 257-residue polypeptide: S-methyl-5'-thioadenosine phosphorylase (257 aa).

Residues S10 and R50–H51 contribute to the phosphate site. An intrachain disulfide couples C130 to C195. M180 lines the substrate pocket. A phosphate-binding site is contributed by T181. D204–D206 serves as a coordination point for substrate. An intrachain disulfide couples C246 to C248.

This sequence belongs to the PNP/MTAP phosphorylase family. MTAP subfamily. As to quaternary structure, homohexamer. Dimer of a homotrimer.

The catalysed reaction is S-methyl-5'-thioadenosine + phosphate = 5-(methylsulfanyl)-alpha-D-ribose 1-phosphate + adenine. The protein operates within amino-acid biosynthesis; L-methionine biosynthesis via salvage pathway; S-methyl-5-thio-alpha-D-ribose 1-phosphate from S-methyl-5'-thioadenosine (phosphorylase route): step 1/1. Its function is as follows. Catalyzes the reversible phosphorylation of S-methyl-5'-thioadenosine (MTA) to adenine and 5-methylthioribose-1-phosphate. Involved in the breakdown of MTA, a major by-product of polyamine biosynthesis. Responsible for the first step in the methionine salvage pathway after MTA has been generated from S-adenosylmethionine. Has broad substrate specificity with 6-aminopurine nucleosides as preferred substrates. This chain is S-methyl-5'-thioadenosine phosphorylase, found in Pyrococcus furiosus (strain ATCC 43587 / DSM 3638 / JCM 8422 / Vc1).